The chain runs to 412 residues: Gamma-glutamyl phosphate reductase (412 aa).

This sequence belongs to the gamma-glutamyl phosphate reductase family.

Its subcellular location is the cytoplasm. The enzyme catalyses L-glutamate 5-semialdehyde + phosphate + NADP(+) = L-glutamyl 5-phosphate + NADPH + H(+). The protein operates within amino-acid biosynthesis; L-proline biosynthesis; L-glutamate 5-semialdehyde from L-glutamate: step 2/2. In terms of biological role, catalyzes the NADPH-dependent reduction of L-glutamate 5-phosphate into L-glutamate 5-semialdehyde and phosphate. The product spontaneously undergoes cyclization to form 1-pyrroline-5-carboxylate. In Actinobacillus pleuropneumoniae serotype 7 (strain AP76), this protein is Gamma-glutamyl phosphate reductase.